We begin with the raw amino-acid sequence, 553 residues long: Dihydroxy-acid dehydratase (553 aa).

Aspartate 78 lines the Mg(2+) pocket. Residue cysteine 119 coordinates [2Fe-2S] cluster. Mg(2+) is bound by residues aspartate 120 and lysine 121. At lysine 121 the chain carries N6-carboxylysine. Position 193 (cysteine 193) interacts with [2Fe-2S] cluster. Glutamate 441 contacts Mg(2+). The active-site Proton acceptor is the serine 467.

It belongs to the IlvD/Edd family. Homodimer. The cofactor is [2Fe-2S] cluster. Mg(2+) is required as a cofactor.

The catalysed reaction is (2R)-2,3-dihydroxy-3-methylbutanoate = 3-methyl-2-oxobutanoate + H2O. It carries out the reaction (2R,3R)-2,3-dihydroxy-3-methylpentanoate = (S)-3-methyl-2-oxopentanoate + H2O. It functions in the pathway amino-acid biosynthesis; L-isoleucine biosynthesis; L-isoleucine from 2-oxobutanoate: step 3/4. The protein operates within amino-acid biosynthesis; L-valine biosynthesis; L-valine from pyruvate: step 3/4. Its function is as follows. Functions in the biosynthesis of branched-chain amino acids. Catalyzes the dehydration of (2R,3R)-2,3-dihydroxy-3-methylpentanoate (2,3-dihydroxy-3-methylvalerate) into 2-oxo-3-methylpentanoate (2-oxo-3-methylvalerate) and of (2R)-2,3-dihydroxy-3-methylbutanoate (2,3-dihydroxyisovalerate) into 2-oxo-3-methylbutanoate (2-oxoisovalerate), the penultimate precursor to L-isoleucine and L-valine, respectively. The protein is Dihydroxy-acid dehydratase of Geobacter metallireducens (strain ATCC 53774 / DSM 7210 / GS-15).